Here is a 214-residue protein sequence, read N- to C-terminus: Holliday junction branch migration complex subunit RuvA (214 aa).

Positions 1 to 63 (MISSLRGTVL…EDSLTLFGFP (63 aa)) are domain I. Positions 64 to 139 (GPDELRAFEL…KLFVTQPRTR (76 aa)) are domain II. The flexible linker stretch occupies residues 139–143 (RSASS). Positions 144-214 (AASTVTADVV…APAAAQAADR (71 aa)) are domain III.

This sequence belongs to the RuvA family. Homotetramer. Forms an RuvA(8)-RuvB(12)-Holliday junction (HJ) complex. HJ DNA is sandwiched between 2 RuvA tetramers; dsDNA enters through RuvA and exits via RuvB. An RuvB hexamer assembles on each DNA strand where it exits the tetramer. Each RuvB hexamer is contacted by two RuvA subunits (via domain III) on 2 adjacent RuvB subunits; this complex drives branch migration. In the full resolvosome a probable DNA-RuvA(4)-RuvB(12)-RuvC(2) complex forms which resolves the HJ.

It is found in the cytoplasm. The RuvA-RuvB-RuvC complex processes Holliday junction (HJ) DNA during genetic recombination and DNA repair, while the RuvA-RuvB complex plays an important role in the rescue of blocked DNA replication forks via replication fork reversal (RFR). RuvA specifically binds to HJ cruciform DNA, conferring on it an open structure. The RuvB hexamer acts as an ATP-dependent pump, pulling dsDNA into and through the RuvAB complex. HJ branch migration allows RuvC to scan DNA until it finds its consensus sequence, where it cleaves and resolves the cruciform DNA. This Clavibacter sepedonicus (Clavibacter michiganensis subsp. sepedonicus) protein is Holliday junction branch migration complex subunit RuvA.